Consider the following 357-residue polypeptide: CD4+ T-cell-stimulating antigen (357 aa).

An N-terminal signal peptide occupies residues 1–22; sequence MKKRTFALALSMIIASGVVLGA. The N-palmitoyl cysteine moiety is linked to residue C23. C23 is lipidated: S-diacylglycerol cysteine.

This sequence belongs to the BMP lipoprotein family.

The protein resides in the cell membrane. The chain is CD4+ T-cell-stimulating antigen (tcsA) from Listeria innocua serovar 6a (strain ATCC BAA-680 / CLIP 11262).